Here is a 446-residue protein sequence, read N- to C-terminus: Probable D-serine dehydratase (446 aa).

K116 carries the post-translational modification N6-(pyridoxal phosphate)lysine.

This sequence belongs to the serine/threonine dehydratase family. DsdA subfamily. Pyridoxal 5'-phosphate is required as a cofactor.

It carries out the reaction D-serine = pyruvate + NH4(+). The protein is Probable D-serine dehydratase of Bacillus cereus (strain ZK / E33L).